We begin with the raw amino-acid sequence, 333 residues long: DNA-directed RNA polymerase subunit alpha (333 aa).

Residues 1 to 234 (MQISVNEFLT…QQLAAFVDLK (234 aa)) form an alpha N-terminal domain (alpha-NTD) region. An alpha C-terminal domain (alpha-CTD) region spans residues 248 to 333 (IDPILLRPVD…SLKKDDKATA (86 aa)).

The protein belongs to the RNA polymerase alpha chain family. As to quaternary structure, homodimer. The RNAP catalytic core consists of 2 alpha, 1 beta, 1 beta' and 1 omega subunit. When a sigma factor is associated with the core the holoenzyme is formed, which can initiate transcription.

It carries out the reaction RNA(n) + a ribonucleoside 5'-triphosphate = RNA(n+1) + diphosphate. Its function is as follows. DNA-dependent RNA polymerase catalyzes the transcription of DNA into RNA using the four ribonucleoside triphosphates as substrates. The polypeptide is DNA-directed RNA polymerase subunit alpha (Ectopseudomonas mendocina (strain ymp) (Pseudomonas mendocina)).